Consider the following 121-residue polypeptide: U15-barytoxin-Tl1a (121 aa).

The signal sequence occupies residues methionine 1–alanine 17. 4 disulfide bridges follow: cysteine 56/cysteine 74, cysteine 67/cysteine 80, cysteine 71/cysteine 119, and cysteine 73/cysteine 90.

It belongs to the neurotoxin 03 (Tx2) family. 03 subfamily. Expressed by the venom gland.

It localises to the secreted. Functionally, ion channel inhibitor. The sequence is that of U15-barytoxin-Tl1a from Trittame loki (Brush-footed trapdoor spider).